Consider the following 119-residue polypeptide: Immunoglobulin heavy variable 3-72 (119 aa).

A signal peptide spans 1–19 (MEFGLSWVFLVVILQGVQC). Residues 20-44 (EVQLVESGGGLVQPGGSLRLSCAAS) form a framework-1 region. One can recognise an Ig-like domain in the interval 20–119 (EVQLVESGGG…EDTAVYYCAR (100 aa)). The cysteines at positions 41 and 117 are disulfide-linked. The tract at residues 45–52 (GFTFSDHY) is complementarity-determining-1. The segment at 53–69 (MDWVRQAPGKGLEWVGR) is framework-2. A complementarity-determining-2 region spans residues 70-79 (TRNKANSYTT). A framework-3 region spans residues 80-117 (EYAASVKGRFTISRDDSKNSLYLQMNSLKTEDTAVYYC). The segment at 118-119 (AR) is complementarity-determining-3.

In terms of assembly, immunoglobulins are composed of two identical heavy chains and two identical light chains; disulfide-linked.

Its subcellular location is the secreted. The protein resides in the cell membrane. Functionally, v region of the variable domain of immunoglobulin heavy chains that participates in the antigen recognition. Immunoglobulins, also known as antibodies, are membrane-bound or secreted glycoproteins produced by B lymphocytes. In the recognition phase of humoral immunity, the membrane-bound immunoglobulins serve as receptors which, upon binding of a specific antigen, trigger the clonal expansion and differentiation of B lymphocytes into immunoglobulins-secreting plasma cells. Secreted immunoglobulins mediate the effector phase of humoral immunity, which results in the elimination of bound antigens. The antigen binding site is formed by the variable domain of one heavy chain, together with that of its associated light chain. Thus, each immunoglobulin has two antigen binding sites with remarkable affinity for a particular antigen. The variable domains are assembled by a process called V-(D)-J rearrangement and can then be subjected to somatic hypermutations which, after exposure to antigen and selection, allow affinity maturation for a particular antigen. This chain is Immunoglobulin heavy variable 3-72, found in Homo sapiens (Human).